The chain runs to 372 residues: Partitioning defective 6 homolog beta (372 aa).

A Phosphoserine modification is found at serine 11. A PB1 domain is found at 16–96 (TMEVKSKFGA…PLLRIFIQKK (81 aa)). Residues 126–253 (RKKPHIVISM…ITVRPANQRN (128 aa)) are interaction with PARD3 and CDC42. The region spanning 133 to 150 (ISMPQDFRPVSSIIDVDI) is the Pseudo-CRIB domain. The 94-residue stretch at 157–250 (RVRLYKYGTE…NLIITVRPAN (94 aa)) folds into the PDZ domain. Residues 253–272 (NNVVRNSRTSGSSGQSTDNS) show a composition bias toward polar residues. A disordered region spans residues 253–292 (NNVVRNSRTSGSSGQSTDNSLLGYPQQIEPSFEPEDEDSE).

It belongs to the PAR6 family. As to quaternary structure, interacts with PARD3. Interacts with GTP-bound forms of CDC42 and RAC1. Interacts with GTP-bound RHOQ/TC10. Interacts with PALS1. Interacts with the N-terminal part of PRKCI and PRKCZ. Part of a complex with PARD3, CDC42 or RAC1 and PRKCI or PRKCZ. Part of a complex with LLGL1 and PRKCI. Interacts with PARD3B. Interacts with ECT2. Expressed in pancreas and in both adult and fetal kidney. Weakly expressed in placenta and lung. Not expressed in other tissues.

The protein localises to the cytoplasm. It is found in the cell membrane. Its subcellular location is the cell junction. It localises to the tight junction. Functionally, adapter protein involved in asymmetrical cell division and cell polarization processes. Probably involved in formation of epithelial tight junctions. Association with PARD3 may prevent the interaction of PARD3 with F11R/JAM1, thereby preventing tight junction assembly. The PARD6-PARD3 complex links GTP-bound Rho small GTPases to atypical protein kinase C proteins. The sequence is that of Partitioning defective 6 homolog beta (PARD6B) from Homo sapiens (Human).